The following is a 597-amino-acid chain: Elongation factor 4 (597 aa).

In terms of domain architecture, tr-type G spans 2 to 184; it reads KNIRNFSIIA…SIVEHLPAPE (183 aa). GTP contacts are provided by residues 14-19 and 131-134; these read DHGKST and NKID.

The protein belongs to the TRAFAC class translation factor GTPase superfamily. Classic translation factor GTPase family. LepA subfamily.

The protein localises to the cell inner membrane. It catalyses the reaction GTP + H2O = GDP + phosphate + H(+). Functionally, required for accurate and efficient protein synthesis under certain stress conditions. May act as a fidelity factor of the translation reaction, by catalyzing a one-codon backward translocation of tRNAs on improperly translocated ribosomes. Back-translocation proceeds from a post-translocation (POST) complex to a pre-translocation (PRE) complex, thus giving elongation factor G a second chance to translocate the tRNAs correctly. Binds to ribosomes in a GTP-dependent manner. The protein is Elongation factor 4 of Desulfotalea psychrophila (strain LSv54 / DSM 12343).